Consider the following 285-residue polypeptide: Bifunctional protein FolD 2 (285 aa).

NADP(+)-binding positions include 164–166, Ser-189, and Val-230; that span reads GRS.

This sequence belongs to the tetrahydrofolate dehydrogenase/cyclohydrolase family. Homodimer.

It catalyses the reaction (6R)-5,10-methylene-5,6,7,8-tetrahydrofolate + NADP(+) = (6R)-5,10-methenyltetrahydrofolate + NADPH. It carries out the reaction (6R)-5,10-methenyltetrahydrofolate + H2O = (6R)-10-formyltetrahydrofolate + H(+). Its pathway is one-carbon metabolism; tetrahydrofolate interconversion. Functionally, catalyzes the oxidation of 5,10-methylenetetrahydrofolate to 5,10-methenyltetrahydrofolate and then the hydrolysis of 5,10-methenyltetrahydrofolate to 10-formyltetrahydrofolate. In Geobacter sulfurreducens (strain ATCC 51573 / DSM 12127 / PCA), this protein is Bifunctional protein FolD 2.